We begin with the raw amino-acid sequence, 383 residues long: 8-amino-7-oxononanoate synthase (383 aa).

Arginine 23 contacts substrate. 110–111 (GF) serves as a coordination point for pyridoxal 5'-phosphate. Residue histidine 135 participates in substrate binding. 3 residues coordinate pyridoxal 5'-phosphate: serine 181, histidine 209, and threonine 235. An N6-(pyridoxal phosphate)lysine modification is found at lysine 238. Threonine 351 contributes to the substrate binding site.

Belongs to the class-II pyridoxal-phosphate-dependent aminotransferase family. BioF subfamily. In terms of assembly, homodimer. Pyridoxal 5'-phosphate is required as a cofactor.

The enzyme catalyses 6-carboxyhexanoyl-[ACP] + L-alanine + H(+) = (8S)-8-amino-7-oxononanoate + holo-[ACP] + CO2. It functions in the pathway cofactor biosynthesis; biotin biosynthesis. In terms of biological role, catalyzes the decarboxylative condensation of pimeloyl-[acyl-carrier protein] and L-alanine to produce 8-amino-7-oxononanoate (AON), [acyl-carrier protein], and carbon dioxide. This is 8-amino-7-oxononanoate synthase from Aliivibrio salmonicida (strain LFI1238) (Vibrio salmonicida (strain LFI1238)).